We begin with the raw amino-acid sequence, 436 residues long: UDP-N-acetylmuramate--L-alanine ligase (436 aa).

Gly111–Ser117 contributes to the ATP binding site.

The protein belongs to the MurCDEF family.

It is found in the cytoplasm. The enzyme catalyses UDP-N-acetyl-alpha-D-muramate + L-alanine + ATP = UDP-N-acetyl-alpha-D-muramoyl-L-alanine + ADP + phosphate + H(+). The protein operates within cell wall biogenesis; peptidoglycan biosynthesis. Cell wall formation. The protein is UDP-N-acetylmuramate--L-alanine ligase of Lactiplantibacillus plantarum (strain ATCC BAA-793 / NCIMB 8826 / WCFS1) (Lactobacillus plantarum).